Consider the following 198-residue polypeptide: Ribonuclease HII (198 aa).

Residues 2 to 192 (MYYCGIDEAG…IKKIIDNQKN (191 aa)) enclose the RNase H type-2 domain. A divalent metal cation is bound by residues D8, E9, and D101.

Belongs to the RNase HII family. Mn(2+) is required as a cofactor. The cofactor is Mg(2+).

It localises to the cytoplasm. The enzyme catalyses Endonucleolytic cleavage to 5'-phosphomonoester.. Endonuclease that specifically degrades the RNA of RNA-DNA hybrids. This chain is Ribonuclease HII, found in Natranaerobius thermophilus (strain ATCC BAA-1301 / DSM 18059 / JW/NM-WN-LF).